The sequence spans 457 residues: Bifunctional protein GlmU (457 aa).

The interval 1 to 229 (MYNCAIILAA…YEEIMGVNSR (229 aa)) is pyrophosphorylase. Residues 8–11 (LAAG), Lys-22, Gln-73, and 78–79 (GT) contribute to the UDP-N-acetyl-alpha-D-glucosamine site. Residue Asp-103 coordinates Mg(2+). Residues Gly-140, Glu-155, Asn-170, and Asn-227 each contribute to the UDP-N-acetyl-alpha-D-glucosamine site. Residue Asn-227 coordinates Mg(2+). The linker stretch occupies residues 230 to 250 (VQLSEAEIVMRKRINHKHMVN). Positions 251–457 (GVTFIDCEST…WLDKKGLLKK (207 aa)) are N-acetyltransferase. UDP-N-acetyl-alpha-D-glucosamine is bound by residues Arg-332 and Lys-350. His-362 acts as the Proton acceptor in catalysis. UDP-N-acetyl-alpha-D-glucosamine contacts are provided by Tyr-365 and Asn-376. Residues 385 to 386 (NY), Ala-422, and Arg-439 contribute to the acetyl-CoA site.

In the N-terminal section; belongs to the N-acetylglucosamine-1-phosphate uridyltransferase family. The protein in the C-terminal section; belongs to the transferase hexapeptide repeat family. In terms of assembly, homotrimer. Mg(2+) is required as a cofactor.

Its subcellular location is the cytoplasm. It carries out the reaction alpha-D-glucosamine 1-phosphate + acetyl-CoA = N-acetyl-alpha-D-glucosamine 1-phosphate + CoA + H(+). It catalyses the reaction N-acetyl-alpha-D-glucosamine 1-phosphate + UTP + H(+) = UDP-N-acetyl-alpha-D-glucosamine + diphosphate. It functions in the pathway nucleotide-sugar biosynthesis; UDP-N-acetyl-alpha-D-glucosamine biosynthesis; N-acetyl-alpha-D-glucosamine 1-phosphate from alpha-D-glucosamine 6-phosphate (route II): step 2/2. Its pathway is nucleotide-sugar biosynthesis; UDP-N-acetyl-alpha-D-glucosamine biosynthesis; UDP-N-acetyl-alpha-D-glucosamine from N-acetyl-alpha-D-glucosamine 1-phosphate: step 1/1. It participates in bacterial outer membrane biogenesis; LPS lipid A biosynthesis. In terms of biological role, catalyzes the last two sequential reactions in the de novo biosynthetic pathway for UDP-N-acetylglucosamine (UDP-GlcNAc). The C-terminal domain catalyzes the transfer of acetyl group from acetyl coenzyme A to glucosamine-1-phosphate (GlcN-1-P) to produce N-acetylglucosamine-1-phosphate (GlcNAc-1-P), which is converted into UDP-GlcNAc by the transfer of uridine 5-monophosphate (from uridine 5-triphosphate), a reaction catalyzed by the N-terminal domain. This chain is Bifunctional protein GlmU, found in Clostridium botulinum (strain 657 / Type Ba4).